The sequence spans 156 residues: Arginine repressor (156 aa).

It belongs to the ArgR family.

It localises to the cytoplasm. It participates in amino-acid biosynthesis; L-arginine biosynthesis [regulation]. In terms of biological role, regulates arginine biosynthesis genes. The sequence is that of Arginine repressor from Photobacterium profundum (strain SS9).